The primary structure comprises 522 residues: Neutral amino acid uniporter 4 (522 aa).

10 helical membrane-spanning segments follow: residues 115–135, 181–201, 226–246, 255–275, 293–313, 329–349, 377–397, 409–429, 435–455, and 467–487; these read AGVL…IHCM, LVDW…FVFL, SLDL…LVFI, LSFF…QYVI, YPLF…VLPL, IGMA…YFCF, FGIY…ILPA, LCEF…AVLI, VISF…PPLV, and PWVI…FIAG. The N-linked (GlcNAc...) asparagine glycan is linked to N515.

This sequence belongs to the amino acid/polyamine transporter 2 family.

It localises to the lysosome membrane. It catalyses the reaction L-tryptophan(in) = L-tryptophan(out). It carries out the reaction L-alanine(in) = L-alanine(out). The catalysed reaction is L-proline(in) = L-proline(out). Its function is as follows. Uniporter that mediates the transport of neutral amino acids like L-tryptophan, proline and alanine. The transport activity is sodium ions-independent, electroneutral and therefore functions via facilitated diffusion. This is Neutral amino acid uniporter 4 from Xenopus laevis (African clawed frog).